Consider the following 207-residue polypeptide: 2,3-bisphosphoglycerate-dependent phosphoglycerate mutase (207 aa).

Residues 10-17, 23-24, arginine 62, 89-92, lysine 100, 116-117, and 160-161 contribute to the substrate site; these read RHGQSEWN, TG, ERDY, RR, and GN. Catalysis depends on histidine 11, which acts as the Tele-phosphohistidine intermediate. The Proton donor/acceptor role is filled by glutamate 89.

It belongs to the phosphoglycerate mutase family. BPG-dependent PGAM subfamily. Homodimer.

It catalyses the reaction (2R)-2-phosphoglycerate = (2R)-3-phosphoglycerate. The protein operates within carbohydrate degradation; glycolysis; pyruvate from D-glyceraldehyde 3-phosphate: step 3/5. Catalyzes the interconversion of 2-phosphoglycerate and 3-phosphoglycerate. The sequence is that of 2,3-bisphosphoglycerate-dependent phosphoglycerate mutase from Nitrobacter hamburgensis (strain DSM 10229 / NCIMB 13809 / X14).